The sequence spans 439 residues: Serine/threonine-protein kinase 2 (439 aa).

The 353-residue stretch at Asn-87–Asn-439 folds into the Protein kinase domain. Residues Ile-93 to Val-101 and Lys-117 contribute to the ATP site. Asp-307 acts as the Proton acceptor in catalysis.

This sequence belongs to the protein kinase superfamily. Ser/Thr protein kinase family. Poxviruses subfamily. In terms of processing, phosphorylated in vivo. Autophosphorylated in vitro.

Its subcellular location is the host endoplasmic reticulum. The protein localises to the host endoplasmic reticulum-Golgi intermediate compartment. The catalysed reaction is L-seryl-[protein] + ATP = O-phospho-L-seryl-[protein] + ADP + H(+). It carries out the reaction L-threonyl-[protein] + ATP = O-phospho-L-threonyl-[protein] + ADP + H(+). In terms of biological role, essential serine-protein kinase involved in the early stage of virion morphogenesis. This chain is Serine/threonine-protein kinase 2 (OPG054), found in Homo sapiens (Human).